Here is a 529-residue protein sequence, read N- to C-terminus: MTLSPYLQEVAKRRTFAIISHPDAGKTTITEKVLLFGQAIQTAGTVKGRGSSQHAKSDWMEMEKQRGISITTSVMQFPYHDCLVNLLDTPGHEDFSEDTYRTLTAVDCCLMVIDAAKGVEDRTRKLMEVTRLRDTPILTFMNKLDRDIRDPMELLDEVENELKIGCAPITWPIGCGKLFKGVYHLYKDETYLYQTGKGHTIQEVRIVKGLNNPDLDAAVGEDLAQQLRDELELVQGASNEFDKDLFLAGEITPVFFGTALGNFGVDHMLDGLVEWAPAPMPRQTDTRTVEASEEKFSGFVFKIQANMDPKHRDRVAFMRVVSGKYEKGMKLRQVRTGKDVVISDALTFMAGDRSHVEEAYPGDILGLHNHGTIQIGDTFTQGEMMKFTGIPNFAPELFRRIRLKDPLKQKQLLKGLVQLSEEGAVQVFRPISNNDLIVGAVGVLQFDVVVARLKSEYNVEAIYESVNVATARWVESTDAKKFEEFKRKNETQLALDGGDNLTYIAPTMVNLNLTQERYPDVQFRKTREH.

The 270-residue stretch at 11-280 (AKRRTFAIIS…GLVEWAPAPM (270 aa)) folds into the tr-type G domain. Residues 20–27 (SHPDAGKT), 88–92 (DTPGH), and 142–145 (NKLD) contribute to the GTP site.

Belongs to the TRAFAC class translation factor GTPase superfamily. Classic translation factor GTPase family. PrfC subfamily.

It is found in the cytoplasm. Increases the formation of ribosomal termination complexes and stimulates activities of RF-1 and RF-2. It binds guanine nucleotides and has strong preference for UGA stop codons. It may interact directly with the ribosome. The stimulation of RF-1 and RF-2 is significantly reduced by GTP and GDP, but not by GMP. This chain is Peptide chain release factor 3, found in Salmonella arizonae (strain ATCC BAA-731 / CDC346-86 / RSK2980).